A 354-amino-acid chain; its full sequence is Fructose-bisphosphate aldolase (354 aa).

S61 provides a ligand contact to D-glyceraldehyde 3-phosphate. D104 (proton donor) is an active-site residue. Residues H105, D139, E169, and H221 each contribute to the Zn(2+) site. G222 is a binding site for dihydroxyacetone phosphate. H260 contributes to the Zn(2+) binding site. Residues 261–263 (GGS) and 282–285 (NIDT) each bind dihydroxyacetone phosphate.

Belongs to the class II fructose-bisphosphate aldolase family. Homodimer. Zn(2+) is required as a cofactor.

It catalyses the reaction beta-D-fructose 1,6-bisphosphate = D-glyceraldehyde 3-phosphate + dihydroxyacetone phosphate. Its pathway is carbohydrate degradation; glycolysis; D-glyceraldehyde 3-phosphate and glycerone phosphate from D-glucose: step 4/4. Functionally, catalyzes the aldol condensation of dihydroxyacetone phosphate (DHAP or glycerone-phosphate) with glyceraldehyde 3-phosphate (G3P) to form fructose 1,6-bisphosphate (FBP) in gluconeogenesis and the reverse reaction in glycolysis. In Campylobacter jejuni subsp. jejuni serotype O:23/36 (strain 81-176), this protein is Fructose-bisphosphate aldolase (fba).